The sequence spans 222 residues: DUF1769 family protein (222 aa).

This sequence belongs to the UPF0590 family.

The protein localises to the cytoplasm. It localises to the nucleus. In Schizosaccharomyces pombe (strain 972 / ATCC 24843) (Fission yeast), this protein is DUF1769 family protein.